The chain runs to 102 residues: Transcription factor UPBEAT1 (102 aa).

Residues 32-82 (IRPRKSVEASRRPCRAIHRRVKTLKELVPNTKTSEGLDGLFRQTADYILAL) enclose the bHLH domain.

Homodimer. Expressed in the root vascular tissue and in root hairs and lateral root caps. Detected at the protein level in all cell files in the elongation zone.

The protein resides in the nucleus. In terms of biological role, transcription factor that modulates the balance between cellular proliferation and differentiation in root growth. Does not act through cytokinin and auxin signaling, but by repressing peroxidase expression in the elongation zone. The chain is Transcription factor UPBEAT1 (UPB1) from Arabidopsis thaliana (Mouse-ear cress).